Consider the following 429-residue polypeptide: Alpha-galactosidase A (429 aa).

A signal peptide spans 1–31; it reads MQLRNPELHLGCALALRFLALVSWDIPGARA. 2 cysteine pairs are disulfide-bonded: Cys52–Cys94 and Cys56–Cys63. Residue Asn139 is glycosylated (N-linked (GlcNAc...) asparagine). Residues Cys142 and Cys172 are joined by a disulfide bond. Residue Asp170 is the Nucleophile of the active site. Asn192 carries an N-linked (GlcNAc...) asparagine glycan. Cys202 and Cys223 are oxidised to a cystine. A substrate-binding site is contributed by 203–207; it reads EWPLY. Asn215 carries N-linked (GlcNAc...) asparagine glycosylation. Residue Asp231 is the Proton donor of the active site. An intrachain disulfide couples Cys378 to Cys382.

It belongs to the glycosyl hydrolase 27 family. In terms of assembly, homodimer.

The protein resides in the lysosome. The catalysed reaction is Hydrolysis of terminal, non-reducing alpha-D-galactose residues in alpha-D-galactosides, including galactose oligosaccharides, galactomannans and galactolipids.. It catalyses the reaction a globoside Gb3Cer (d18:1(4E)) + H2O = a beta-D-Gal-(1-&gt;4)-beta-D-Glc-(1&lt;-&gt;1)-Cer(d18:1(4E)) + D-galactose. It carries out the reaction a globoside Gb3Cer + H2O = a beta-D-galactosyl-(1-&gt;4)-beta-D-glucosyl-(1&lt;-&gt;1)-ceramide + D-galactose. With respect to regulation, galactosylgalactosylglucosylceramidase activity is stimulated by saposin B and ammonium chloride. In terms of biological role, catalyzes the hydrolysis of glycosphingolipids and participates in their degradation in the lysosome. The protein is Alpha-galactosidase A of Homo sapiens (Human).